The chain runs to 465 residues: MPPCYPFLLSWEGWARDPPGRPGGAMRAHIITYGCQMNEYDSHLVASELVSLGWELVDSVEEADFVLVNTCAVRGKPVEKVRSLLGQLRKEKERRGLLIGMMGCLAQLDEGQQMAKKFGVDVLLGPGALTSLPEALKANERFFDLTFREDVLDYIPPPPKGALSAHVTIIRGCNHHCTYCIVPTTRGPEVSRHPDLILKEIELLKQAGVVEVTLLGQNVNSYGKDQPGFPSFAELLRMVGGMGIPRVRFLTSHPVNFTDDIIEAIAETPAICRYIHLPVQSGSDRVLRRMAREYRRAHYLERIRKIREALPDAVLSTDIIVGFPGETEEDFQETLSLYDEVGYDQAYMFIYSPRPGTPAYKHFQDLPREVKVERLMRLIEKQKEWSYRRNLEWVGKTVEVLVRGEAKEEGFVQGHDRGNHPVLVPASQAPVPGLYQVEIKQATPHLLFGEVVGAEAPAPIPLPVA.

An MTTase N-terminal domain is found at 26-141 (MRAHIITYGC…LPEALKANER (116 aa)). [4Fe-4S] cluster contacts are provided by Cys-35, Cys-71, Cys-104, Cys-173, Cys-177, and Cys-180. Residues 159–388 (PKGALSAHVT…IEKQKEWSYR (230 aa)) form the Radical SAM core domain. The TRAM domain maps to 391 to 453 (LEWVGKTVEV…PHLLFGEVVG (63 aa)).

It belongs to the methylthiotransferase family. MiaB subfamily. As to quaternary structure, monomer. [4Fe-4S] cluster serves as cofactor.

It localises to the cytoplasm. It carries out the reaction N(6)-dimethylallyladenosine(37) in tRNA + (sulfur carrier)-SH + AH2 + 2 S-adenosyl-L-methionine = 2-methylsulfanyl-N(6)-dimethylallyladenosine(37) in tRNA + (sulfur carrier)-H + 5'-deoxyadenosine + L-methionine + A + S-adenosyl-L-homocysteine + 2 H(+). Its function is as follows. Catalyzes the methylthiolation of N6-(dimethylallyl)adenosine (i(6)A), leading to the formation of 2-methylthio-N6-(dimethylallyl)adenosine (ms(2)i(6)A) at position 37 in tRNAs that read codons beginning with uridine. The protein is tRNA-2-methylthio-N(6)-dimethylallyladenosine synthase of Thermus thermophilus (strain ATCC BAA-163 / DSM 7039 / HB27).